Reading from the N-terminus, the 256-residue chain is Thiazole synthase (256 aa).

K98 serves as the catalytic Schiff-base intermediate with DXP. 1-deoxy-D-xylulose 5-phosphate is bound by residues G159, 185–186, and 207–208; these read AG and NT.

Belongs to the ThiG family. In terms of assembly, homotetramer. Forms heterodimers with either ThiH or ThiS.

The protein resides in the cytoplasm. The enzyme catalyses [ThiS sulfur-carrier protein]-C-terminal-Gly-aminoethanethioate + 2-iminoacetate + 1-deoxy-D-xylulose 5-phosphate = [ThiS sulfur-carrier protein]-C-terminal Gly-Gly + 2-[(2R,5Z)-2-carboxy-4-methylthiazol-5(2H)-ylidene]ethyl phosphate + 2 H2O + H(+). Its pathway is cofactor biosynthesis; thiamine diphosphate biosynthesis. Catalyzes the rearrangement of 1-deoxy-D-xylulose 5-phosphate (DXP) to produce the thiazole phosphate moiety of thiamine. Sulfur is provided by the thiocarboxylate moiety of the carrier protein ThiS. In vitro, sulfur can be provided by H(2)S. This chain is Thiazole synthase, found in Syntrophobacter fumaroxidans (strain DSM 10017 / MPOB).